The following is a 317-amino-acid chain: Flagellar hook-associated protein 3 (317 aa).

It belongs to the bacterial flagellin family.

The protein localises to the secreted. It is found in the bacterial flagellum. The sequence is that of Flagellar hook-associated protein 3 (flgL) from Escherichia coli (strain K12).